A 137-amino-acid polypeptide reads, in one-letter code: Large-conductance mechanosensitive channel (137 aa).

The next 2 membrane-spanning stretches (helical) occupy residues 10-30 and 76-96; these read FAMR…AAFG and GVFI…FMAI.

This sequence belongs to the MscL family. In terms of assembly, homopentamer.

It is found in the cell inner membrane. In terms of biological role, channel that opens in response to stretch forces in the membrane lipid bilayer. May participate in the regulation of osmotic pressure changes within the cell. The chain is Large-conductance mechanosensitive channel from Enterobacter sp. (strain 638).